The chain runs to 126 residues: Large ribosomal subunit protein bL12 (126 aa).

The segment at 97 to 126 (PQPVKSGVSKEEAEEAKKQLAESGAEVEVK) is disordered. The span at 104–116 (VSKEEAEEAKKQL) shows a compositional bias: basic and acidic residues.

The protein belongs to the bacterial ribosomal protein bL12 family. Homodimer. Part of the ribosomal stalk of the 50S ribosomal subunit. Forms a multimeric L10(L12)X complex, where L10 forms an elongated spine to which 2 to 4 L12 dimers bind in a sequential fashion. Binds GTP-bound translation factors.

Its function is as follows. Forms part of the ribosomal stalk which helps the ribosome interact with GTP-bound translation factors. Is thus essential for accurate translation. This chain is Large ribosomal subunit protein bL12, found in Geotalea uraniireducens (strain Rf4) (Geobacter uraniireducens).